We begin with the raw amino-acid sequence, 445 residues long: Reticulon-4 receptor-like 1 (445 aa).

Residues 1 to 24 (MLRKGCCVELLLLLLAGELPLGGG) form the signal peptide. In terms of domain architecture, LRRNT spans 25–54 (CPRDCVCYPAPMTVSCQAHNFAAIPEGIPE). 8 LRR repeats span residues 55–76 (DSER…HFSP), 77–98 (AMVT…TFEG), 101–123 (HLEE…TFQG), 126–147 (KLHA…IFGG), 150–171 (SLQY…IFVD), 174–195 (NLSH…IFRG), 198–219 (NLDR…AFHD), and 222–243 (RLTT…CLAP). The LRRCT domain maps to 255-306 (NAWDCGCRARSLWEWLRRFRGSSSAVPCATPELRQGQDLKLLRVEDFRNCTG). Disordered regions lie at residues 307-377 (PVSP…SGKE) and 401-424 (RPKR…QQAS). Basic residues-rich tracts occupy residues 352–366 (GYKK…HRNR) and 401–413 (RPKR…RRTP). Residue Ser-424 is the site of GPI-anchor amidated serine attachment. The helical transmembrane segment at 424–444 (SSGTALGAPLLAWILGLAVTL) threads the bilayer. A propeptide spans 425–445 (SGTALGAPLLAWILGLAVTLR) (removed in mature form).

It belongs to the Nogo receptor family. In terms of assembly, identified in a complex that contains RTN4R, RTN4RL1 and NGFR; the interaction depends on the presence of chondroitin sulfate proteoglycans. Does not interact with MAG, OMG and RTN4. As to expression, detected in brain (at protein level). Detected in retina ganglion cell layer and inner nuclear layer.

Its subcellular location is the cell membrane. The protein localises to the membrane raft. It is found in the perikaryon. It localises to the cell projection. Its function is as follows. Cell surface receptor that plays a functionally redundant role in postnatal brain development and in regulating axon regeneration in the adult central nervous system. Contributes to normal axon migration across the brain midline and normal formation of the corpus callosum. Protects motoneurons against apoptosis; protection against apoptosis is probably mediated by MAG. Plays a role in inhibiting neurite outgrowth and axon regeneration via its binding to neuronal chondroitin sulfate proteoglycans. Binds heparin. Like other family members, plays a role in restricting the number dendritic spines and the number of synapses that are formed during brain development. Signaling mediates activation of Rho and downstream reorganization of the actin cytoskeleton. The protein is Reticulon-4 receptor-like 1 of Mus musculus (Mouse).